Consider the following 208-residue polypeptide: CASP-like protein 1D1 (208 aa).

A disordered region spans residues 1–36; the sequence is MSSVDTEKPAPPPLETEAPPPPPPPPPPPPPPPPPP. The Cytoplasmic portion of the chain corresponds to 1 to 41; sequence MSSVDTEKPAPPPLETEAPPPPPPPPPPPPPPPPPPAGYSA. Positions 9–36 are enriched in pro residues; that stretch reads PAPPPLETEAPPPPPPPPPPPPPPPPPP. Residues 42-62 traverse the membrane as a helical segment; the sequence is LDVVLRILLLGSAVASVVVMV. Over 63–89 the chain is Extracellular; that stretch reads TSVQTKLIAVAGVPVLVSNKAKFQNSP. Residues 90 to 110 traverse the membrane as a helical segment; that stretch reads AFIYFVAALSVVGLYSIITTL. The Cytoplasmic portion of the chain corresponds to 111–133; the sequence is ASFIFISKPSCSTKTILHLAIWD. A helical membrane pass occupies residues 134-154; sequence VLMLGLAASATGTAGGVAYVG. Topologically, residues 155–180 are extracellular; the sequence is LKGNSHVGWNKVCNTYDKFCRHVGGS. A helical membrane pass occupies residues 181 to 201; it reads IAVALFASILLVLLVWLSLFT. Residues 202-208 lie on the Cytoplasmic side of the membrane; it reads LYSRIRK.

Belongs to the Casparian strip membrane proteins (CASP) family. Homodimer and heterodimers.

It is found in the cell membrane. This chain is CASP-like protein 1D1, found in Vitis vinifera (Grape).